We begin with the raw amino-acid sequence, 226 residues long: Orotate phosphoribosyltransferase (226 aa).

Lysine 29 contacts 5-phospho-alpha-D-ribose 1-diphosphate. 37 to 38 provides a ligand contact to orotate; it reads FF. Residues 75-76, arginine 101, lysine 102, lysine 105, histidine 107, and 126-134 contribute to the 5-phospho-alpha-D-ribose 1-diphosphate site; these read YK and DDVISAGTS. Orotate contacts are provided by serine 130 and arginine 158.

Belongs to the purine/pyrimidine phosphoribosyltransferase family. PyrE subfamily. Homodimer. Mg(2+) serves as cofactor.

It catalyses the reaction orotidine 5'-phosphate + diphosphate = orotate + 5-phospho-alpha-D-ribose 1-diphosphate. The protein operates within pyrimidine metabolism; UMP biosynthesis via de novo pathway; UMP from orotate: step 1/2. Its function is as follows. Catalyzes the transfer of a ribosyl phosphate group from 5-phosphoribose 1-diphosphate to orotate, leading to the formation of orotidine monophosphate (OMP). This chain is Orotate phosphoribosyltransferase, found in Ralstonia nicotianae (strain ATCC BAA-1114 / GMI1000) (Ralstonia solanacearum).